We begin with the raw amino-acid sequence, 255 residues long: uncharacterized protein (255 aa).

The protein belongs to the methyltransferase superfamily.

This is an uncharacterized protein from Mycolicibacterium paratuberculosis (strain ATCC BAA-968 / K-10) (Mycobacterium paratuberculosis).